The primary structure comprises 164 residues: Phosphopantetheine adenylyltransferase (164 aa).

A substrate-binding site is contributed by Ser-9. ATP-binding positions include 9 to 10 (SF) and His-17. Positions 41, 73, and 87 each coordinate substrate. ATP-binding positions include 88–90 (GLR), Glu-98, and 123–129 (YSYLSSS).

This sequence belongs to the bacterial CoaD family. Homohexamer. It depends on Mg(2+) as a cofactor.

It localises to the cytoplasm. It catalyses the reaction (R)-4'-phosphopantetheine + ATP + H(+) = 3'-dephospho-CoA + diphosphate. Its pathway is cofactor biosynthesis; coenzyme A biosynthesis; CoA from (R)-pantothenate: step 4/5. Its function is as follows. Reversibly transfers an adenylyl group from ATP to 4'-phosphopantetheine, yielding dephospho-CoA (dPCoA) and pyrophosphate. This chain is Phosphopantetheine adenylyltransferase, found in Clostridium botulinum (strain ATCC 19397 / Type A).